The sequence spans 96 residues: Nucleoid-associated protein CT_335 (96 aa).

This sequence belongs to the YbaB/EbfC family. As to quaternary structure, homodimer.

The protein resides in the cytoplasm. The protein localises to the nucleoid. Binds to DNA and alters its conformation. May be involved in regulation of gene expression, nucleoid organization and DNA protection. The sequence is that of Nucleoid-associated protein CT_335 from Chlamydia trachomatis serovar D (strain ATCC VR-885 / DSM 19411 / UW-3/Cx).